A 399-amino-acid chain; its full sequence is Methylthioribose kinase (399 aa).

ATP-binding positions include Asn40, Lys57, and 111–113 (EDL). A substrate-binding site is contributed by Asp229. 246–248 (DAE) contacts ATP. A substrate-binding site is contributed by Arg344.

Belongs to the methylthioribose kinase family. As to quaternary structure, homodimer.

It catalyses the reaction 5-(methylsulfanyl)-D-ribose + ATP = 5-(methylsulfanyl)-alpha-D-ribose 1-phosphate + ADP + H(+). It functions in the pathway amino-acid biosynthesis; L-methionine biosynthesis via salvage pathway; S-methyl-5-thio-alpha-D-ribose 1-phosphate from S-methyl-5'-thioadenosine (hydrolase route): step 2/2. In terms of biological role, catalyzes the phosphorylation of methylthioribose into methylthioribose-1-phosphate. In Klebsiella pneumoniae (strain 342), this protein is Methylthioribose kinase.